The primary structure comprises 340 residues: Coproporphyrin III ferrochelatase (340 aa).

The Fe-coproporphyrin III site is built by Ser52 and Tyr116. His172 and Glu255 together coordinate Fe(2+).

Belongs to the ferrochelatase family.

The protein resides in the cytoplasm. It catalyses the reaction Fe-coproporphyrin III + 2 H(+) = coproporphyrin III + Fe(2+). The protein operates within porphyrin-containing compound metabolism; protoheme biosynthesis. Its function is as follows. Involved in coproporphyrin-dependent heme b biosynthesis. Catalyzes the insertion of ferrous iron into coproporphyrin III to form Fe-coproporphyrin III. The sequence is that of Coproporphyrin III ferrochelatase from Mycobacterium marinum (strain ATCC BAA-535 / M).